A 216-amino-acid polypeptide reads, in one-letter code: Large ribosomal subunit protein eL15 (216 aa).

Belongs to the eukaryotic ribosomal protein eL15 family.

The chain is Large ribosomal subunit protein eL15 from Metallosphaera sedula (strain ATCC 51363 / DSM 5348 / JCM 9185 / NBRC 15509 / TH2).